We begin with the raw amino-acid sequence, 413 residues long: Tyrosine--tRNA ligase 2 (413 aa).

A 'HIGH' region motif is present at residues proline 58–histidine 67. 2 consecutive repeat copies span residues glycine 89–lysine 94 and glycine 96–lysine 101. Positions glycine 89–lysine 101 are 2 X 6 AA tandem repeats. The 'KMSKS' region motif lies at lysine 242–serine 246. Position 245 (lysine 245) interacts with ATP. In terms of domain architecture, S4 RNA-binding spans isoleucine 353 to glutamine 413.

It belongs to the class-I aminoacyl-tRNA synthetase family. TyrS type 2 subfamily. As to quaternary structure, homodimer.

The protein localises to the cytoplasm. It catalyses the reaction tRNA(Tyr) + L-tyrosine + ATP = L-tyrosyl-tRNA(Tyr) + AMP + diphosphate + H(+). In terms of biological role, catalyzes the attachment of tyrosine to tRNA(Tyr) in a two-step reaction: tyrosine is first activated by ATP to form Tyr-AMP and then transferred to the acceptor end of tRNA(Tyr). In Bacillus subtilis (strain 168), this protein is Tyrosine--tRNA ligase 2.